Reading from the N-terminus, the 482-residue chain is tRNA-2-methylthio-N(6)-dimethylallyladenosine synthase (482 aa).

An MTTase N-terminal domain is found at 3–120 (KKLHIKTWGC…LPEMIKQVQG (118 aa)). 6 residues coordinate [4Fe-4S] cluster: cysteine 12, cysteine 49, cysteine 83, cysteine 158, cysteine 162, and cysteine 165. The Radical SAM core domain maps to 144-376 (KADGPSAFVS…QNRITQMAQQ (233 aa)). Residues 379-442 (RQMFDTEQRI…PNSLRGDLIR (64 aa)) form the TRAM domain.

This sequence belongs to the methylthiotransferase family. MiaB subfamily. In terms of assembly, monomer. Requires [4Fe-4S] cluster as cofactor.

The protein resides in the cytoplasm. It carries out the reaction N(6)-dimethylallyladenosine(37) in tRNA + (sulfur carrier)-SH + AH2 + 2 S-adenosyl-L-methionine = 2-methylsulfanyl-N(6)-dimethylallyladenosine(37) in tRNA + (sulfur carrier)-H + 5'-deoxyadenosine + L-methionine + A + S-adenosyl-L-homocysteine + 2 H(+). Catalyzes the methylthiolation of N6-(dimethylallyl)adenosine (i(6)A), leading to the formation of 2-methylthio-N6-(dimethylallyl)adenosine (ms(2)i(6)A) at position 37 in tRNAs that read codons beginning with uridine. This Pseudoalteromonas translucida (strain TAC 125) protein is tRNA-2-methylthio-N(6)-dimethylallyladenosine synthase.